We begin with the raw amino-acid sequence, 565 residues long: NAD-dependent malic enzyme (565 aa).

The active-site Proton donor is the Tyr-104. Arg-157 is a binding site for NAD(+). Residue Lys-175 is the Proton acceptor of the active site. A divalent metal cation-binding residues include Glu-246, Asp-247, and Asp-270. NAD(+) contacts are provided by Asp-270 and Asn-418.

This sequence belongs to the malic enzymes family. In terms of assembly, homotetramer. Mg(2+) is required as a cofactor. It depends on Mn(2+) as a cofactor.

The enzyme catalyses (S)-malate + NAD(+) = pyruvate + CO2 + NADH. The catalysed reaction is oxaloacetate + H(+) = pyruvate + CO2. In Photorhabdus laumondii subsp. laumondii (strain DSM 15139 / CIP 105565 / TT01) (Photorhabdus luminescens subsp. laumondii), this protein is NAD-dependent malic enzyme.